The primary structure comprises 274 residues: MNPEHSPLGKTTVYANQYDASLLFPIPRAGAREQIGIGAPLPFFGTDIWNAYELSWLNARGKPQVAIATFYVPAESPNIVESKSFKLYLGSFAQTAFESIDAVRDALKRDVSAACGASVTVRLATPAEFRKLQMDELDGLSLDRLDLDADVYETDPSFLTASHDEAPVEETLVTDLLKSNCPVTGQPDWGSVQIHYVGAPIDHAGLLRYIISFRNHTGFHEQCVERIFIDILRACKPVKLAVYARYTRRGGLDINPFRTNYNQPMPDNARTARQ.

80-82 (VES) provides a ligand contact to substrate. 82–83 (SK) lines the NADPH pocket. The active-site Thioimide intermediate is the C181. D188 (proton donor) is an active-site residue. Position 220 to 221 (220 to 221 (HE)) interacts with substrate. 249–250 (RG) contributes to the NADPH binding site.

It belongs to the GTP cyclohydrolase I family. QueF type 2 subfamily. In terms of assembly, homodimer.

The protein resides in the cytoplasm. It carries out the reaction 7-aminomethyl-7-carbaguanine + 2 NADP(+) = 7-cyano-7-deazaguanine + 2 NADPH + 3 H(+). It participates in tRNA modification; tRNA-queuosine biosynthesis. In terms of biological role, catalyzes the NADPH-dependent reduction of 7-cyano-7-deazaguanine (preQ0) to 7-aminomethyl-7-deazaguanine (preQ1). This chain is NADPH-dependent 7-cyano-7-deazaguanine reductase, found in Burkholderia thailandensis (strain ATCC 700388 / DSM 13276 / CCUG 48851 / CIP 106301 / E264).